Reading from the N-terminus, the 304-residue chain is C-type lectin domain family 10 member A (304 aa).

Over methionine 1 to histidine 35 the chain is Cytoplasmic. The helical; Signal-anchor for type II membrane protein transmembrane segment at leucine 36–serine 56 threads the bilayer. Topologically, residues glutamine 57–serine 304 are extracellular. Residues asparagine 74 and asparagine 166 are each glycosylated (N-linked (GlcNAc...) asparagine). The C-type lectin domain maps to cysteine 172–methionine 298. 3 cysteine pairs are disulfide-bonded: cysteine 173/cysteine 184, cysteine 201/cysteine 296, and cysteine 274/cysteine 288.

In terms of assembly, homooligomer. Interacts with SIGLEC1, which may act as a counter-receptor for CLEC10A in lymph node. As to expression, detected in lymph node in the subcapsular sinus, interfollicular regions, T and B-cell boundary and in the areas surrounding high endothelial venules (at protein level). Expressed on the surface of activated macrophages. Expressed in heart, lung, testis, skeletal muscle, spleen, brain, kidney and thymus. Expressed in P388, RAW 264.7 and M1 cell lines.

The protein localises to the membrane. Functionally, recognizes terminal galactose and N-acetylgalactosamine units. May participate in the interaction between tumoricidal macrophages and tumor cells. Plays a role in the recruitment of inflammatory monocytes to adipose tissue in diet-induced obesity. The chain is C-type lectin domain family 10 member A (Clec10a) from Mus musculus (Mouse).